Consider the following 1755-residue polypeptide: E3 ubiquitin-protein ligase UBR2 (1755 aa).

The residue at position 2 (alanine 2) is an N-acetylalanine. Residue lysine 94 forms a Glycyl lysine isopeptide (Lys-Gly) (interchain with G-Cter in ubiquitin) linkage. A UBR-type zinc finger spans residues 97–168; sequence HLCGRVFKVG…EGPYCQKHEL (72 aa). Positions 99, 112, 115, 124, 127, 133, and 136 each coordinate Zn(2+). Phenylalanine 148 serves as a coordination point for a peptide. Cysteine 149 provides a ligand contact to Zn(2+). A peptide is bound at residue aspartate 150. A Zn(2+)-binding site is contributed by cysteine 151. Aspartate 153 contacts a peptide. A Glycyl lysine isopeptide (Lys-Gly) (interchain with G-Cter in ubiquitin) cross-link involves residue lysine 158. Cysteine 163 is a binding site for Zn(2+). A Glycyl lysine isopeptide (Lys-Gly) (interchain with G-Cter in ubiquitin) cross-link involves residue lysine 165. Histidine 166 is a Zn(2+) binding site. Residues lysine 248, lysine 255, and lysine 470 each participate in a glycyl lysine isopeptide (Lys-Gly) (interchain with G-Cter in ubiquitin) cross-link. A Phosphoserine modification is found at serine 476. Residues lysine 488, lysine 568, lysine 779, and lysine 789 each participate in a glycyl lysine isopeptide (Lys-Gly) (interchain with G-Cter in ubiquitin) cross-link. Residues 1004–1034 form a disordered region; that stretch reads ESSPTSPVAETEGTIMEESSRDKDKAERKRK. Positions 1019 to 1054 form a coiled coil; it reads MEESSRDKDKAERKRKAEIARLRREKIMAQMSEMQR. Positions 1021-1034 are enriched in basic and acidic residues; it reads ESSRDKDKAERKRK. Positions 1108, 1111, 1168, 1170, 1173, 1176, 1210, and 1213 each coordinate Zn(2+). The RING-type; atypical zinc finger occupies 1108 to 1214; sequence CILCQEEQEV…NGEFLCPLCE (107 aa). Residues 1261-1287 are disordered; it reads RKEESTPNNASTKNSENVDELQLPEGF. Over residues 1266–1275 the composition is skewed to polar residues; sequence TPNNASTKNS. Glycyl lysine isopeptide (Lys-Gly) (interchain with G-Cter in ubiquitin) cross-links involve residues lysine 1496, lysine 1599, and lysine 1689. A Phosphoserine modification is found at serine 1694. At tyrosine 1697 the chain carries Phosphotyrosine.

Belongs to the E3 ubiquitin-protein ligase UBR1-like family. Interacts with UBE2B; promotes the UBE2B-H2A interaction and the ubiquitination of histone H2A by UBE2B and UBR2. Interacts with RECQL4. Interacts with TEX19; does not lead to TEX19 degradation and stabilizes it. Interacts with CASP8. Interacts with ATXN3. Interacts with UBE2O. Dephosphorylated by DUSP22 at Ser-1694 and Tyr-1697, leading to subsequent ubiquitination and proteasomal degradation. Post-translationally, 'Lys-48'-linked ubiquitinated at Lys-94, Lys-779 and Lys-1599 following DUSP22-mediated dephosphorylation of Ser-1694 and Tyr-1697 which promotes UBR2 interaction with the SCF(FBW1A) E3 ubiquitin-protein ligase complex. As to expression, broadly expressed, with highest levels in skeletal muscle, kidney and pancreas. Present in acinar cells of the pancreas (at protein level).

Its subcellular location is the nucleus. It is found in the chromosome. It carries out the reaction S-ubiquitinyl-[E2 ubiquitin-conjugating enzyme]-L-cysteine + [acceptor protein]-L-lysine = [E2 ubiquitin-conjugating enzyme]-L-cysteine + N(6)-ubiquitinyl-[acceptor protein]-L-lysine.. It functions in the pathway protein modification; protein ubiquitination. Functionally, E3 ubiquitin-protein ligase which is a component of the N-end rule pathway. Recognizes and binds to proteins bearing specific N-terminal residues (N-degrons) that are destabilizing according to the N-end rule, leading to their ubiquitination and subsequent degradation. Recognizes both type-1 and type-2 N-degrons, containing positively charged amino acids (Arg, Lys and His) and bulky and hydrophobic amino acids, respectively. Does not ubiquitinate proteins that are acetylated at the N-terminus. In contrast, it strongly binds methylated N-degrons. Plays a critical role in chromatin inactivation and chromosome-wide transcriptional silencing during meiosis via ubiquitination of histone H2A. Binds leucine and is a negative regulator of the leucine-mTOR signaling pathway, thereby controlling cell growth. Required for spermatogenesis, promotes, with Tex19.1, SPO11-dependent recombination foci to accumulate and drive robust homologous chromosome synapsis. Polyubiquitinates LINE-1 retrotransposon encoded, LIRE1, which induces degradation, inhibiting LINE-1 retrotransposon mobilization. Catalyzes ubiquitination and degradation of the N-terminal part of NLRP1 following NLRP1 activation by pathogens and other damage-associated signals: ubiquitination promotes degradation of the N-terminal part and subsequent release of the cleaved C-terminal part of NLRP1, which polymerizes and forms the NLRP1 inflammasome followed by host cell pyroptosis. Plays a role in T-cell receptor signaling by inducing 'Lys-63'-linked ubiquitination of lymphocyte cell-specific kinase LCK. This activity is regulated by DUSP22, which induces 'Lys-48'-linked ubiquitination of UBR2, leading to its proteasomal degradation by SCF E3 ubiquitin-protein ligase complex. The chain is E3 ubiquitin-protein ligase UBR2 (UBR2) from Homo sapiens (Human).